The sequence spans 158 residues: MNIVQGNIEAKNAKVAIVISRFNSFLVESLLEGALDTLKRFGQVSDDNITVVRVPGAVELPLAARRVAASGKFDGIIALGAVIRGGTPHFDFVAGECNKGLAQVALEFDLPVAFGVLTTDTIEQAIERSGTKAGNKGGEAALSLLEMVNVLQELEQQL.

5-amino-6-(D-ribitylamino)uracil is bound by residues Phe22, 57–59 (AVE), and 81–83 (AVI). 86–87 (GT) lines the (2S)-2-hydroxy-3-oxobutyl phosphate pocket. The active-site Proton donor is His89. Residue Phe114 participates in 5-amino-6-(D-ribitylamino)uracil binding. Residue Arg128 participates in (2S)-2-hydroxy-3-oxobutyl phosphate binding.

This sequence belongs to the DMRL synthase family. Forms an icosahedral capsid composed of 60 subunits, arranged as a dodecamer of pentamers.

It catalyses the reaction (2S)-2-hydroxy-3-oxobutyl phosphate + 5-amino-6-(D-ribitylamino)uracil = 6,7-dimethyl-8-(1-D-ribityl)lumazine + phosphate + 2 H2O + H(+). It participates in cofactor biosynthesis; riboflavin biosynthesis; riboflavin from 2-hydroxy-3-oxobutyl phosphate and 5-amino-6-(D-ribitylamino)uracil: step 1/2. Functionally, catalyzes the formation of 6,7-dimethyl-8-ribityllumazine by condensation of 5-amino-6-(D-ribitylamino)uracil with 3,4-dihydroxy-2-butanone 4-phosphate. This is the penultimate step in the biosynthesis of riboflavin. The polypeptide is 6,7-dimethyl-8-ribityllumazine synthase (Shewanella putrefaciens (strain CN-32 / ATCC BAA-453)).